The sequence spans 987 residues: Ephrin type-B receptor 2 (987 aa).

Positions 1 to 19 are cleaved as a signal peptide; that stretch reads MGPLWFCCLPLALLPLLAA. Over 20–544 the chain is Extracellular; the sequence is VEETLMDSTT…QTSVQEKLPL (525 aa). One can recognise an Eph LBD domain in the interval 21 to 203; that stretch reads EETLMDSTTA…FYRKCPRVIQ (183 aa). 2 disulfides stabilise this stretch: Cys-63–Cys-185 and Cys-98–Cys-108. Residues Asn-266, Asn-337, Asn-429, Asn-478, and Asn-483 are each glycosylated (N-linked (GlcNAc...) asparagine). 2 Fibronectin type-III domains span residues 325–435 and 436–531; these read IPSA…TNQA and APSA…TMTE. The chain crosses the membrane as a helical span at residues 545 to 565; the sequence is IIGSSAAGLVFLIAVVVIIIV. Over 566 to 987 the chain is Cytoplasmic; it reads CNRRGFERAD…QMNQIQSVEV (422 aa). Residues 622-885 form the Protein kinase domain; that stretch reads VKIEQVIGAG…QIVNTLDKMI (264 aa). Residues 628–636 and Lys-654 each bind ATP; that span reads IGAGEFGEV. Asp-747 acts as the Proton acceptor in catalysis. Lys-892 participates in a covalent cross-link: Glycyl lysine isopeptide (Lys-Gly) (interchain with G-Cter in ubiquitin). The 65-residue stretch at 914-978 folds into the SAM domain; the sequence is TSFNTVDEWL…LNSIQVMRAQ (65 aa). The PDZ-binding motif lies at 985-987; it reads VEV.

Belongs to the protein kinase superfamily. Tyr protein kinase family. Ephrin receptor subfamily. In terms of assembly, heterotetramer upon binding of the ligand. The heterotetramer is composed of an ephrin dimer and a receptor dimer. Oligomerization is probably required to induce biological responses. Post-translationally, ligand binding induces cleavage by matrix metalloproteinases (MMPs) such as MMP7/MMP9, producing an EphB2/N-terminal fragment (NTF) and a C-terminal long fragment (EphB2-LF). EphB2-LF is further cleaved by MMPs, producing EphB2/CTF1 which is further cleaved by the PS1/gamma-secretase producing EphB2/CTF2. Polyubiquitinated; ligand binding stimulates ubiquitination. Ubiquitinated by RNF186 at Lys-892, mainly through 'Lys-27'-linked polyubiquitin chains.

Its subcellular location is the cell membrane. The protein resides in the cell projection. The protein localises to the axon. It localises to the dendrite. The catalysed reaction is L-tyrosyl-[protein] + ATP = O-phospho-L-tyrosyl-[protein] + ADP + H(+). In terms of biological role, receptor tyrosine kinase which binds promiscuously transmembrane ephrin-B family ligands residing on adjacent cells, leading to contact-dependent bidirectional signaling into neighboring cells. The signaling pathway downstream of the receptor is referred to as forward signaling while the signaling pathway downstream of the ephrin ligand is referred to as reverse signaling. Functions in axon guidance during development. In addition to axon guidance, also regulates dendritic spines development and maturation and stimulates the formation of excitatory synapses. In Coturnix japonica (Japanese quail), this protein is Ephrin type-B receptor 2 (EPHB2).